A 610-amino-acid polypeptide reads, in one-letter code: Methionine--tRNA ligase (610 aa).

Positions 12-22 match the 'HIGH' region motif; that stretch reads PYANGPRHIGH. The Zn(2+) site is built by cysteine 144, cysteine 147, cysteine 157, and cysteine 160. The 'KMSKS' region motif lies at 348-352; the sequence is KFSSS. Serine 351 serves as a coordination point for ATP.

The protein belongs to the class-I aminoacyl-tRNA synthetase family. MetG type 1 subfamily. Monomer. Zn(2+) serves as cofactor.

Its subcellular location is the cytoplasm. It carries out the reaction tRNA(Met) + L-methionine + ATP = L-methionyl-tRNA(Met) + AMP + diphosphate. Its function is as follows. Is required not only for elongation of protein synthesis but also for the initiation of all mRNA translation through initiator tRNA(fMet) aminoacylation. The sequence is that of Methionine--tRNA ligase from Corynebacterium glutamicum (strain R).